A 742-amino-acid chain; its full sequence is Polyphosphate kinase (742 aa).

Asn-91 is an ATP binding site. Residues Arg-431 and Arg-461 each coordinate Mg(2+). His-491 serves as the catalytic Phosphohistidine intermediate. 3 residues coordinate ATP: Tyr-524, Arg-624, and His-652. Residues 718–742 (WTASPQEGHSVRDHQESLMERHRSP) form a disordered region. Over residues 726 to 742 (HSVRDHQESLMERHRSP) the composition is skewed to basic and acidic residues.

Belongs to the polyphosphate kinase 1 (PPK1) family. Mg(2+) is required as a cofactor. In terms of processing, an intermediate of this reaction is the autophosphorylated ppk in which a phosphate is covalently linked to a histidine residue through a N-P bond.

It catalyses the reaction [phosphate](n) + ATP = [phosphate](n+1) + ADP. Functionally, catalyzes the reversible transfer of the terminal phosphate of ATP to form a long-chain polyphosphate (polyP). This is Polyphosphate kinase from Mycobacterium bovis (strain ATCC BAA-935 / AF2122/97).